The sequence spans 177 residues: Large ribosomal subunit protein uL6 (177 aa).

This sequence belongs to the universal ribosomal protein uL6 family. Part of the 50S ribosomal subunit.

Functionally, this protein binds to the 23S rRNA, and is important in its secondary structure. It is located near the subunit interface in the base of the L7/L12 stalk, and near the tRNA binding site of the peptidyltransferase center. The protein is Large ribosomal subunit protein uL6 of Rhodospirillum rubrum (strain ATCC 11170 / ATH 1.1.1 / DSM 467 / LMG 4362 / NCIMB 8255 / S1).